A 464-amino-acid polypeptide reads, in one-letter code: ATP synthase subunit beta (464 aa).

An ATP-binding site is contributed by 153–160 (GGAGVGKT).

This sequence belongs to the ATPase alpha/beta chains family. In terms of assembly, F-type ATPases have 2 components, CF(1) - the catalytic core - and CF(0) - the membrane proton channel. CF(1) has five subunits: alpha(3), beta(3), gamma(1), delta(1), epsilon(1). CF(0) has three main subunits: a(1), b(2) and c(9-12). The alpha and beta chains form an alternating ring which encloses part of the gamma chain. CF(1) is attached to CF(0) by a central stalk formed by the gamma and epsilon chains, while a peripheral stalk is formed by the delta and b chains.

Its subcellular location is the cell inner membrane. It carries out the reaction ATP + H2O + 4 H(+)(in) = ADP + phosphate + 5 H(+)(out). Its function is as follows. Produces ATP from ADP in the presence of a proton gradient across the membrane. The catalytic sites are hosted primarily by the beta subunits. This is ATP synthase subunit beta from Burkholderia orbicola (strain MC0-3).